Consider the following 212-residue polypeptide: Bilin biosynthesis protein PecF (212 aa).

The protein belongs to the CpcE/RpcE/PecE family.

Its function is as follows. An enzyme involved in the biosynthesis of bilin. The protein is Bilin biosynthesis protein PecF (pecF) of Mastigocladus laminosus (Fischerella sp.).